The chain runs to 376 residues: Anhydro-N-acetylmuramic acid kinase (376 aa).

Position 16–23 (glycine 16–aspartate 23) interacts with ATP.

Belongs to the anhydro-N-acetylmuramic acid kinase family.

It catalyses the reaction 1,6-anhydro-N-acetyl-beta-muramate + ATP + H2O = N-acetyl-D-muramate 6-phosphate + ADP + H(+). Its pathway is amino-sugar metabolism; 1,6-anhydro-N-acetylmuramate degradation. The protein operates within cell wall biogenesis; peptidoglycan recycling. Its function is as follows. Catalyzes the specific phosphorylation of 1,6-anhydro-N-acetylmuramic acid (anhMurNAc) with the simultaneous cleavage of the 1,6-anhydro ring, generating MurNAc-6-P. Is required for the utilization of anhMurNAc either imported from the medium or derived from its own cell wall murein, and thus plays a role in cell wall recycling. This chain is Anhydro-N-acetylmuramic acid kinase, found in Paraburkholderia xenovorans (strain LB400).